We begin with the raw amino-acid sequence, 554 residues long: NADH-quinone oxidoreductase subunit N 3 (554 aa).

Transmembrane regions (helical) follow at residues 35-55 (LMPV…EAFV), 65-85 (LFLT…LAAG), 105-125 (PTLF…FTFA), 161-181 (GFTT…LLVF), 187-207 (LLTL…LCAV), 222-242 (YFLL…LLYG), 275-295 (ALLL…VGAV), 322-342 (VAAF…LAWD), 345-365 (PVMW…AITQ), 371-391 (LLAY…IAAS), 398-418 (VLFY…VVTL), 442-462 (VAAV…TSGF), 476-496 (GAGA…FFYI), and 525-545 (IAVG…FLDL).

This sequence belongs to the complex I subunit 2 family. NDH-1 is composed of 14 different subunits. Subunits NuoA, H, J, K, L, M, N constitute the membrane sector of the complex.

Its subcellular location is the cell membrane. It carries out the reaction a quinone + NADH + 5 H(+)(in) = a quinol + NAD(+) + 4 H(+)(out). Functionally, NDH-1 shuttles electrons from NADH, via FMN and iron-sulfur (Fe-S) centers, to quinones in the respiratory chain. The immediate electron acceptor for the enzyme in this species is believed to be a menaquinone. Couples the redox reaction to proton translocation (for every two electrons transferred, four hydrogen ions are translocated across the cytoplasmic membrane), and thus conserves the redox energy in a proton gradient. The sequence is that of NADH-quinone oxidoreductase subunit N 3 from Streptomyces griseus subsp. griseus (strain JCM 4626 / CBS 651.72 / NBRC 13350 / KCC S-0626 / ISP 5235).